Consider the following 503-residue polypeptide: Cytosolic carboxypeptidase 6 (503 aa).

The 272-residue stretch at 167–438 folds into the Peptidase M14 domain; it reads YPYTYTRFQH…NVARTFLDYY (272 aa). Histidine 230, glutamate 233, and histidine 328 together coordinate Zn(2+). Glutamate 401 acts as the Proton donor/acceptor in catalysis. Composition is skewed to basic and acidic residues over residues 459 to 469 and 487 to 503; these read IEVQRRKEKSP and KGDK…STPF. The tract at residues 459–503 is disordered; sequence IEVQRRKEKSPPYKHPLLRGPASNYPNSKGDKKSSVNHKDPSTPF.

This sequence belongs to the peptidase M14 family. In terms of assembly, interacts with MYLK. Requires Zn(2+) as cofactor.

The protein localises to the cytoplasm. It is found in the cytosol. Its subcellular location is the cytoskeleton. It localises to the microtubule organizing center. The protein resides in the centrosome. The protein localises to the centriole. It is found in the golgi apparatus. Its subcellular location is the cilium basal body. It carries out the reaction (L-glutamyl)(n+1)-gamma-L-glutamyl-L-glutamyl-[protein] + H2O = (L-glutamyl)(n)-gamma-L-glutamyl-L-glutamyl-[protein] + L-glutamate. The enzyme catalyses C-terminal L-alpha-aminoacyl-L-glutamyl-L-glutamyl-[tubulin] + H2O = C-terminal L-alpha-aminoacyl-L-glutamyl-[tubulin] + L-glutamate. In terms of biological role, metallocarboxypeptidase that mediates protein deglutamylation of tubulin and non-tubulin target proteins. Catalyzes the removal of polyglutamate side chains present on the gamma-carboxyl group of glutamate residues within the C-terminal tail of tubulin protein. Specifically cleaves tubulin long-side-chains, while it is not able to remove the branching point glutamate. Also catalyzes the removal of polyglutamate residues from the carboxy-terminus of non-tubulin proteins such as MYLK. Mediates the deglutamylation of nucleotidyltransferase CGAS, leading to CGAS antiviral defense response activation. Involved in KLF4 deglutamylation which promotes KLF4 proteasome-mediated degradation, thereby negatively regulating cell pluripotency maintenance and embryogenesis. The polypeptide is Cytosolic carboxypeptidase 6 (Homo sapiens (Human)).